The primary structure comprises 368 residues: tRNA-specific 2-thiouridylase MnmA (368 aa).

Residues 10 to 17 and Met36 each bind ATP; that span reads AMSGGIDS. Residue Cys106 is the Nucleophile of the active site. Cysteines 106 and 203 form a disulfide. Gly130 contacts ATP. An interaction with tRNA region spans residues 152–154; sequence KDQ. Cys203 serves as the catalytic Cysteine persulfide intermediate. The interaction with tRNA stretch occupies residues 313–314; that stretch reads RY.

It belongs to the MnmA/TRMU family.

The protein localises to the cytoplasm. It catalyses the reaction S-sulfanyl-L-cysteinyl-[protein] + uridine(34) in tRNA + AH2 + ATP = 2-thiouridine(34) in tRNA + L-cysteinyl-[protein] + A + AMP + diphosphate + H(+). Its function is as follows. Catalyzes the 2-thiolation of uridine at the wobble position (U34) of tRNA, leading to the formation of s(2)U34. The chain is tRNA-specific 2-thiouridylase MnmA from Cytophaga hutchinsonii (strain ATCC 33406 / DSM 1761 / CIP 103989 / NBRC 15051 / NCIMB 9469 / D465).